Here is a 150-residue protein sequence, read N- to C-terminus: Submaxillary gland androgen-regulated protein 2, isoform alpha (150 aa).

The N-terminal stretch at 1–22 (MKALYMVFVLWVLIGCFLSGEC) is a signal peptide.

It localises to the secreted. In terms of biological role, may play a role in protection or detoxification. The protein is Submaxillary gland androgen-regulated protein 2, isoform alpha (Smr2) of Mus musculus (Mouse).